A 120-amino-acid polypeptide reads, in one-letter code: UPF0231 protein YacL (120 aa).

Belongs to the UPF0231 family.

The polypeptide is UPF0231 protein YacL (Escherichia coli O6:K15:H31 (strain 536 / UPEC)).